Reading from the N-terminus, the 651-residue chain is MGSSSLLLFPSSSSSATHSSYSPSSSSHAITSLLPPLPSDHHLLLYLDHQEQHHLAAAMVRKRPASDMDLPPPRRHVTGDLSDVTAAAAPSSASAQLPALPTQLPAFHHTDMDLAAPAPPPPQQQVAAGEGGPPSTAWVDGIIRDIIASSGAAVSVAQLIHNVREIIRPCNPDLASILELRLRSLLTSDPAPPPPPPPSHPALLPPDATAPPPPPTSVAALPPPPPPQPDKRRREPQCQEQEPNQPQSPKPPTAEETAAAAAAAKERKEEQRRKQRDEEGLHLLTLLLQCAESVNADNLDEAHRALLEIAELATPFGTSTQRVAAYFAEAMSARLVSSCLGLYAPLPNPSPAAARLHGRVAAAFQVFNGISPFVKFSHFTANQAIQEAFEREERVHIIDLDIMQGLQWPGLFHILASRPGGPPRVRLTGLGASMEALEATGKRLSDFADTLGLPFEFCPVADKAGNLDPEKLGVTRREAVAVHWLRHSLYDVTGSDSNTLWLIQRLAPKVVTMVEQDLSHSGSFLARFVEAIHYYSALFDSLDASYSEDSPERHVVEQQLLSREIRNVLAVGGPARTGDVKFGSWREKLAQSGFRVSSLAGSAAAQAVLLLGMFPSDGYTLIEENGALKLGWKDLCLLTASAWRPIQASGR.

Disordered regions lie at residues 1-33 (MGSS…ITSL) and 188-277 (SDPA…KQRD). Residues 190 to 228 (PAPPPPPPPSHPALLPPDATAPPPPPTSVAALPPPPPPQ) show a composition bias toward pro residues. A coiled-coil region spans residues 253–280 (TAEETAAAAAAAKERKEEQRRKQRDEEG). The segment covering 254-263 (AEETAAAAAA) has biased composition (low complexity). Basic and acidic residues predominate over residues 264–277 (AKERKEEQRRKQRD). Positions 274 to 644 (KQRDEEGLHL…LCLLTASAWR (371 aa)) constitute a GRAS domain. The interval 281–345 (LHLLTLLLQC…VSSCLGLYAP (65 aa)) is leucine repeat I (LRI). The short motif at 288–292 (LQCAE) is the LxCxE motif element. The segment at 364–429 (FQVFNGISPF…GGPPRVRLTG (66 aa)) is VHIID. A VHIID motif is present at residues 395–399 (VHIID). The segment at 439–471 (ATGKRLSDFADTLGLPFEFCPVADKAGNLDPEK) is leucine repeat II (LRII). The tract at residues 480 to 567 (VAVHWLRHSL…QQLLSREIRN (88 aa)) is PFYRE. The SAW stretch occupies residues 570 to 644 (AVGGPARTGD…LCLLTASAWR (75 aa)).

This sequence belongs to the GRAS family. In terms of assembly, interacts with SHR1, but not with SHR2. As to expression, expressed in the initial daughter cell before its asymmetric division and remains expressed in the endodermal cell layer after the division.

The protein resides in the nucleus. Its function is as follows. Transcription factor required for quiescent center cells specification and maintenance of surrounding stem cells, and for the asymmetric cell division involved in radial pattern formation in roots. Essential for cell division but not differentiation of the ground tissue. Regulates the radial organization of the shoot axial organs. Restricts SHR movment and sequesters it into the nucleus of the endodermis. The protein is Protein SCARECROW 1 (SCR1) of Oryza sativa subsp. japonica (Rice).